A 480-amino-acid polypeptide reads, in one-letter code: Aspartyl/glutamyl-tRNA(Asn/Gln) amidotransferase subunit B (480 aa).

This sequence belongs to the GatB/GatE family. GatB subfamily. In terms of assembly, heterotrimer of A, B and C subunits.

It carries out the reaction L-glutamyl-tRNA(Gln) + L-glutamine + ATP + H2O = L-glutaminyl-tRNA(Gln) + L-glutamate + ADP + phosphate + H(+). The enzyme catalyses L-aspartyl-tRNA(Asn) + L-glutamine + ATP + H2O = L-asparaginyl-tRNA(Asn) + L-glutamate + ADP + phosphate + 2 H(+). Its function is as follows. Allows the formation of correctly charged Asn-tRNA(Asn) or Gln-tRNA(Gln) through the transamidation of misacylated Asp-tRNA(Asn) or Glu-tRNA(Gln) in organisms which lack either or both of asparaginyl-tRNA or glutaminyl-tRNA synthetases. The reaction takes place in the presence of glutamine and ATP through an activated phospho-Asp-tRNA(Asn) or phospho-Glu-tRNA(Gln). The polypeptide is Aspartyl/glutamyl-tRNA(Asn/Gln) amidotransferase subunit B (Streptococcus agalactiae serotype Ia (strain ATCC 27591 / A909 / CDC SS700)).